A 426-amino-acid polypeptide reads, in one-letter code: Serine hydroxymethyltransferase (426 aa).

(6S)-5,6,7,8-tetrahydrofolate-binding positions include leucine 122 and 126–128 (GHL). Lysine 231 carries the N6-(pyridoxal phosphate)lysine modification. (6S)-5,6,7,8-tetrahydrofolate is bound by residues glutamate 247 and 355–357 (SPF).

It belongs to the SHMT family. Homodimer. Requires pyridoxal 5'-phosphate as cofactor.

Its subcellular location is the cytoplasm. It catalyses the reaction (6R)-5,10-methylene-5,6,7,8-tetrahydrofolate + glycine + H2O = (6S)-5,6,7,8-tetrahydrofolate + L-serine. Its pathway is one-carbon metabolism; tetrahydrofolate interconversion. It functions in the pathway amino-acid biosynthesis; glycine biosynthesis; glycine from L-serine: step 1/1. Catalyzes the reversible interconversion of serine and glycine with tetrahydrofolate (THF) serving as the one-carbon carrier. This reaction serves as the major source of one-carbon groups required for the biosynthesis of purines, thymidylate, methionine, and other important biomolecules. Also exhibits THF-independent aldolase activity toward beta-hydroxyamino acids, producing glycine and aldehydes, via a retro-aldol mechanism. This Cyanothece sp. (strain PCC 7425 / ATCC 29141) protein is Serine hydroxymethyltransferase.